The following is a 476-amino-acid chain: WD repeat, SAM and U-box domain-containing protein 1 (476 aa).

WD repeat units follow at residues 10-47 (DHGD…ELPH), 52-91 (FHTY…MLAV), 95-134 (PSGS…LYRC), 137-176 (VKDG…LHSE), 178-228 (AHDL…LGFE), 237-276 (GHCA…ILHT), and 279-318 (QHTR…LCQA). In terms of domain architecture, SAM spans 332 to 396 (WSEEDVSTWL…LRKIEELRTK (65 aa)). A U-box domain is found at 403-476 (GIPDEFICPI…INRWLETHQK (74 aa)). Thr458 carries the post-translational modification Phosphothreonine.

The chain is WD repeat, SAM and U-box domain-containing protein 1 (WDSUB1) from Homo sapiens (Human).